The sequence spans 340 residues: Serpentine receptor class alpha-23 (340 aa).

The next 6 helical transmembrane spans lie at 34 to 54, 114 to 136, 150 to 170, 199 to 219, 250 to 270, and 284 to 304; these read FIST…QALW, YFYY…DRLI, FIAI…FYIA, VRTV…YLSV, ILIV…NLLL, and VGAF…AIYF.

It belongs to the nematode receptor-like protein sra family.

Its subcellular location is the membrane. The sequence is that of Serpentine receptor class alpha-23 (sra-23) from Caenorhabditis elegans.